We begin with the raw amino-acid sequence, 514 residues long: 2,3-bisphosphoglycerate-independent phosphoglycerate mutase (514 aa).

Positions 14 and 64 each coordinate Mn(2+). The Phosphoserine intermediate role is filled by Ser-64. Substrate contacts are provided by residues His-125, 155–156 (RD), Arg-187, Arg-193, 263–266 (RADR), and Lys-336. Residues Asp-403, His-407, Asp-444, His-445, and His-463 each contribute to the Mn(2+) site.

It belongs to the BPG-independent phosphoglycerate mutase family. Monomer. Mn(2+) is required as a cofactor.

The enzyme catalyses (2R)-2-phosphoglycerate = (2R)-3-phosphoglycerate. It functions in the pathway carbohydrate degradation; glycolysis; pyruvate from D-glyceraldehyde 3-phosphate: step 3/5. Catalyzes the interconversion of 2-phosphoglycerate and 3-phosphoglycerate. This chain is 2,3-bisphosphoglycerate-independent phosphoglycerate mutase, found in Shewanella oneidensis (strain ATCC 700550 / JCM 31522 / CIP 106686 / LMG 19005 / NCIMB 14063 / MR-1).